The following is a 246-amino-acid chain: Proteasome subunit beta type-4 (246 aa).

Residues 1–23 (MTTFSVPIDNGDSMKIAEEESQR) constitute a propeptide that is removed on maturation. The Nucleophile role is filled by Thr-24.

Belongs to the peptidase T1B family. In terms of assembly, component of the 20S core complex of the 26S proteasome. The 26S proteasome is composed of a core protease (CP), known as the 20S proteasome, capped at one or both ends by the 19S regulatory particle (RP/PA700). The 20S proteasome core is composed of 28 subunits that are arranged in four stacked rings, resulting in a barrel-shaped structure. The two end rings are each formed by seven alpha subunits, and the two central rings are each formed by seven beta subunits. The catalytic chamber with the active sites is on the inside of the barrel. As to expression, ubiquitous low levels, higher expression in siliques and flowers.

Its subcellular location is the cytoplasm. The protein localises to the nucleus. Its function is as follows. Non-catalytic component of the proteasome, a multicatalytic proteinase complex which is characterized by its ability to cleave peptides with Arg, Phe, Tyr, Leu, and Glu adjacent to the leaving group at neutral or slightly basic pH. The proteasome has an ATP-dependent proteolytic activity. The chain is Proteasome subunit beta type-4 (PBG1) from Arabidopsis thaliana (Mouse-ear cress).